The chain runs to 440 residues: Tryptophan synthase beta chain 2 (440 aa).

Residue Lys-110 is modified to N6-(pyridoxal phosphate)lysine.

Belongs to the TrpB family. In terms of assembly, tetramer of two alpha and two beta chains. Requires pyridoxal 5'-phosphate as cofactor.

The enzyme catalyses (1S,2R)-1-C-(indol-3-yl)glycerol 3-phosphate + L-serine = D-glyceraldehyde 3-phosphate + L-tryptophan + H2O. It participates in amino-acid biosynthesis; L-tryptophan biosynthesis; L-tryptophan from chorismate: step 5/5. In terms of biological role, the beta subunit is responsible for the synthesis of L-tryptophan from indole and L-serine. The protein is Tryptophan synthase beta chain 2 (trpB2) of Pyrococcus abyssi (strain GE5 / Orsay).